We begin with the raw amino-acid sequence, 104 residues long: PE-PGRS family protein PE_PGRS60 (104 aa).

The PE domain maps to 1–60; the sequence is MSYVIAAPEALVAAATDLATLGSTIGAANAAAAGSTTALLTAGADEVSAAIAAYSECTAR. The segment at 64–104 is disordered; it reads HSVRGRRRSMSGSCRPWPQVGAPMRPPRPPASRRCRARSIC. The span at 94-104 shows a compositional bias: basic residues; that stretch reads ASRRCRARSIC.

Belongs to the mycobacterial PE family. PGRS subfamily.

Functionally, binds fibronectin. May contribute to pathogenicity. This is PE-PGRS family protein PE_PGRS60 from Mycobacterium tuberculosis (strain ATCC 25618 / H37Rv).